The following is a 687-amino-acid chain: Adhesion G-protein coupled receptor G1 (687 aa).

Positions 1 to 25 (MTAQSLLQMTLFLLSLLFLVQGAHG) are cleaved as a signal peptide. 26–33 (RGHREDFR) is a binding site for heparin. The Extracellular segment spans residues 26 to 402 (RGHREDFRFC…VEVDAVHKHY (377 aa)). Intrachain disulfides connect cysteine 35-cysteine 91 and cysteine 121-cysteine 177. 3 N-linked (GlcNAc...) asparagine glycosylation sites follow: asparagine 39, asparagine 148, and asparagine 171. 190–200 (LKHPQKASRRP) provides a ligand contact to heparin. The 172-residue stretch at 224–395 (DTVSFEEDRI…AVLMVSSVEV (172 aa)) folds into the GAIN-B domain. Asparagine 234, asparagine 303, asparagine 324, and asparagine 341 each carry an N-linked (GlcNAc...) asparagine glycan. Cystine bridges form between cysteine 346–cysteine 377 and cysteine 366–cysteine 379. The tract at residues 346–395 (CVFWVEDPTLSSPGHWSSAGCETVRRETQTSCFCNHLTYFAVLMVSSVEV) is GPS. Residues 384-397 (YFAVLMVSSVEVDA) form a stachel region. The chain crosses the membrane as a helical span at residues 403–423 (LSLLSYVGCVISALACVVTIA). Topologically, residues 424–442 (AYLCSRRKPRDYTIKVHMN) are cytoplasmic. A helical transmembrane segment spans residues 443–463 (LLLAVFLLDMSFLLSEPVALT). Over 464–470 (GSEAGCR) the chain is Extracellular. A helical transmembrane segment spans residues 471-491 (AGAIFLHFSLLACLSWMGLEG). Topologically, residues 492–512 (YNLYRLVVEVFGTYVPGYLLK) are cytoplasmic. A helical membrane pass occupies residues 513-533 (LSAMGWGFPIFLVTLVALVDV). Topologically, residues 534-570 (DNYGPIILAVHRTPESVIYPSMCWIRDSLVSYVTNLG) are extracellular. A helical transmembrane segment spans residues 571–591 (LFSLVFLFNMAMLGTMVVQIL). Residues 592–603 (RLRPHTQKWSHV) are Cytoplasmic-facing. The chain crosses the membrane as a helical span at residues 604–624 (LTLLGLSLVLGLPWALIFFSF). The Extracellular segment spans residues 625–630 (ASGTFQ). The chain crosses the membrane as a helical span at residues 631-651 (LVVLYLFSIITSFQGFLIFIW). Residues 652 to 687 (YWSMRLQARGGPSPLKSNSDSARLPISSGSTSSSRI) lie on the Cytoplasmic side of the membrane. Residues 664 to 687 (SPLKSNSDSARLPISSGSTSSSRI) form a disordered region. Low complexity predominate over residues 678 to 687 (SSGSTSSSRI).

This sequence belongs to the G-protein coupled receptor 2 family. LN-TM7 subfamily. Heterodimer of 2 chains generated by proteolytic processing; the large extracellular N-terminal fragment (ADGRG1 NT) and the membrane-bound C-terminal fragment (ADGRG1-CT) predominantly remain associated and non-covalently linked. ADGRG1 NT self-associates in a trans-trans manner; the homophilic interaction enhances receptor signaling. Interacts with TGM2. Interacts with heparin; leading to the reduction of ADGRG1 shedding. Interacts with COL3A1. Part of a GPCR-tetraspanin complex at least consisting of ADGRG1, CD81, eventually CD9, and GNA11 in which CD81 is enhancing the association of ADGRG1 with GNA11. Post-translationally, autoproteolytically cleaved into 2 fragments; the large extracellular N-terminal fragment (ADGRG1 NT) and the membrane-bound C-terminal fragment (ADGRG1 CT) predominantly remain associated and non-covalently linked. Shedding to yield the secreted ADGRG1 N-terminal fragment seems to involve metalloprotease(s). Ubiquitinated. Undergoes polyubiquitination upon activation.

It is found in the cell membrane. It localises to the secreted. The protein localises to the membrane raft. With respect to regulation, forms a heterodimer of 2 chains generated by proteolytic processing that remain associated through non-covalent interactions mediated by the GAIN-B domain. In the inactivated receptor, the Stachel sequence (also named stalk) is embedded in the GAIN-B domain, where it adopts a beta-strand conformation. On activation, the Stachel moves into the 7 transmembrane region and adopts a twisted hook-shaped configuration that forms contacts within the receptor, leading to coupling of a G-alpha protein, which activates signaling. The cleaved GAIN-B and N-terminal domains can then dissociate from the rest of the receptor. Adhesion G-protein coupled receptor (aGPCR) for steroid hormone 17alpha-hydroxypregnenolone (17-OH), which is involved in cell adhesion and cell-cell interactions. Ligand binding causes a conformation change that triggers signaling via guanine nucleotide-binding proteins (G proteins) and modulates the activity of downstream effectors, such as RhoA pathway. ADGRG1 is coupled to G(12) and/or G(13) G proteins (GNA12 and GNA13, respectively) and mediates the activation Rho small GTPases. Acts as a potent suppressor of ferroptosis: binding to 17-OH-binding initiates signaling that down-regulates CD36 and alleviates ferroptosis-induced liver injury. Ligand-binding also induces cell adhesion activity via association with proteins such as collagen III/COL3A1 and TGM2. Mediates cell matrix adhesion in developing neurons and hematopoietic stem cells. Involved in cortical development, specifically in maintenance of the pial basement membrane integrity and in cortical lamination: association with COL3A1 in the developing brain inhibits neuronal migration via activation of the RhoA pathway. Together with TGM2, acts as a regulator of myelination and myelin repair in oligodendrocyte precursor cells. Acts as a hemostatic sensor of shear force: G protein-coupled receptor signaling is activated in response to shear force in platelets, promoting G(13) G protein signaling, and platelet shape change and aggregation in a COL3A1-dependent manner. Acts as an inhibitor of VEGFA production thereby inhibiting angiogenesis through a signaling pathway mediated by PRKCA. Plays a role in the maintenance of hematopoietic stem cells in bone marrow niche. Plays an essential role in testis development. The chain is Adhesion G-protein coupled receptor G1 (ADGRG1) from Pongo pygmaeus (Bornean orangutan).